The sequence spans 188 residues: Transmembrane protein 160 (188 aa).

A mitochondrion-targeting transit peptide spans 1–96 (MGGGWWWARV…ISFMQSDMGR (96 aa)). Residues 21–53 (SLQPPQRPRSGGARGSFAPGHGPRAGASPPPVS) form a disordered region. Position 48 is a phosphoserine (Ser48). A run of 2 helical transmembrane segments spans residues 102–122 (FFLL…VGLA) and 135–155 (AAAG…AVGL). The disordered stretch occupies residues 168–188 (PEDDGAASTEGPDEAGRPPPE).

The protein belongs to the TMEM160 family. In terms of tissue distribution, expressed in peripheral sensory neurons of dorsal root ganglia (DRG).

The protein resides in the mitochondrion inner membrane. The polypeptide is Transmembrane protein 160 (Mus musculus (Mouse)).